Here is a 301-residue protein sequence, read N- to C-terminus: Ribonuclease H2 subunit A (301 aa).

Methionine 1 carries the post-translational modification N-acetylmethionine. One can recognise an RNase H type-2 domain in the interval 28 to 251 (PCVLGVDEAG…AQAILEKEAE (224 aa)). The a divalent metal cation site is built by aspartate 34, glutamate 35, and aspartate 142. Threonine 217 is subject to Phosphothreonine. The span at 255 to 264 (WEDSEAEEDP) shows a compositional bias: acidic residues. The interval 255 to 284 (WEDSEAEEDPERPGKITSYFSQGPQTCRPQ) is disordered. Serine 258 is modified (phosphoserine). The segment covering 272–282 (SYFSQGPQTCR) has biased composition (polar residues).

Belongs to the RNase HII family. Eukaryotic subfamily. In terms of assembly, the RNase H2 complex is a heterotrimer composed of the catalytic subunit RNASEH2A and the non-catalytic subunits RNASEH2B and RNASEH2C. Mn(2+) is required as a cofactor. Requires Mg(2+) as cofactor.

It is found in the nucleus. The enzyme catalyses Endonucleolytic cleavage to 5'-phosphomonoester.. In terms of biological role, catalytic subunit of RNase HII, an endonuclease that specifically degrades the RNA of RNA:DNA hybrids. Participates in DNA replication, possibly by mediating the removal of lagging-strand Okazaki fragment RNA primers during DNA replication. Mediates the excision of single ribonucleotides from DNA:RNA duplexes. The chain is Ribonuclease H2 subunit A (Rnaseh2a) from Mus musculus (Mouse).